Reading from the N-terminus, the 216-residue chain is Adenylate kinase (216 aa).

Residue 13 to 18 (GAGKGT) participates in ATP binding. The interval 33–66 (TTGDALRANKDMDISDMDTEYDTPREYMEAGDLV) is NMP. AMP contacts are provided by residues threonine 34, arginine 39, 64 to 66 (DLV), 89 to 92 (GYPR), and glutamine 96. The segment at 125-162 (GRRVCDDCGTNYHVEFNQPEEDGVCDECGGDLIQRDDD) is LID. Arginine 126 provides a ligand contact to ATP. Cysteine 129, cysteine 132, cysteine 149, and cysteine 152 together coordinate Zn(2+). AMP-binding residues include arginine 159 and arginine 170. Glutamine 198 serves as a coordination point for ATP.

It belongs to the adenylate kinase family. As to quaternary structure, monomer.

The protein resides in the cytoplasm. It catalyses the reaction AMP + ATP = 2 ADP. Its pathway is purine metabolism; AMP biosynthesis via salvage pathway; AMP from ADP: step 1/1. Its function is as follows. Catalyzes the reversible transfer of the terminal phosphate group between ATP and AMP. Plays an important role in cellular energy homeostasis and in adenine nucleotide metabolism. This is Adenylate kinase from Haloarcula marismortui (strain ATCC 43049 / DSM 3752 / JCM 8966 / VKM B-1809) (Halobacterium marismortui).